A 1296-amino-acid polypeptide reads, in one-letter code: Aggregation substance (1296 aa).

The signal sequence occupies residues 1-43 (MKQQTEVKKRFKMYKAKKHWVVAPILFIGVLGVVGLATDDVQA). Disordered regions lie at residues 48–188 (TQPG…KPAE) and 1221–1245 (HTPE…TPQA). Positions 89–99 (KVEEVASEKNG) are enriched in basic and acidic residues. Composition is skewed to polar residues over residues 100–117 (AEQS…QQPT) and 125–138 (QEQP…TNEP). Positions 160-178 (KEFETPDVDKAVDEAKKDP) are enriched in basic and acidic residues. Positions 1261 to 1265 (LPQTG) match the LPXTG sorting signal motif. Thr-1264 is modified (pentaglycyl murein peptidoglycan amidated threonine). A propeptide spans 1265-1296 (GEKQNVLLTVAGSLAAMLGLAGLGFKRRKETK) (removed by sortase).

It belongs to the antigen I/II family.

The protein resides in the secreted. Its subcellular location is the cell wall. Functionally, aggregation substance allows donor and recipient strains to form tight aggregates which allow the non-motile bacteria to maintain physical contact over a period of time sufficient to permit conjugative transfer of the sex pheromone plasmid from donor to recipient strains. The chain is Aggregation substance (asa1) from Enterococcus faecalis (strain ATCC 700802 / V583).